We begin with the raw amino-acid sequence, 127 residues long: Ribonuclease P protein component 1 (127 aa).

The protein belongs to the eukaryotic/archaeal RNase P protein component 1 family. Consists of a catalytic RNA component and at least 4-5 protein subunits.

Its subcellular location is the cytoplasm. It catalyses the reaction Endonucleolytic cleavage of RNA, removing 5'-extranucleotides from tRNA precursor.. Part of ribonuclease P, a protein complex that generates mature tRNA molecules by cleaving their 5'-ends. In Pyrococcus abyssi (strain GE5 / Orsay), this protein is Ribonuclease P protein component 1.